A 364-amino-acid polypeptide reads, in one-letter code: D-alanine--D-alanine ligase (364 aa).

Positions 146–352 (KLCAADAGVE…FDELISRLLL (207 aa)) constitute an ATP-grasp domain. 179–234 (TERFAFPVFVKPANLGSSVGISKVHNAAELRPALDKACALDAKVLVEETITGREVE) lines the ATP pocket. Residues aspartate 305, glutamate 319, and asparagine 321 each coordinate Mg(2+).

This sequence belongs to the D-alanine--D-alanine ligase family. Mg(2+) is required as a cofactor. The cofactor is Mn(2+).

The protein localises to the cytoplasm. It carries out the reaction 2 D-alanine + ATP = D-alanyl-D-alanine + ADP + phosphate + H(+). Its pathway is cell wall biogenesis; peptidoglycan biosynthesis. Its function is as follows. Cell wall formation. The sequence is that of D-alanine--D-alanine ligase from Chlorobaculum parvum (strain DSM 263 / NCIMB 8327) (Chlorobium vibrioforme subsp. thiosulfatophilum).